Reading from the N-terminus, the 106-residue chain is MNDSEFHRLADQLWLTIEERLDDWDGDSDIDCEINGGVLTITFENGSKIIINRQEPLHQVWLATRQGGYHFDLKGDEWICDRSGETFWDLLEQAATQQAGETVSFR.

The protein belongs to the frataxin family.

In terms of biological role, involved in iron-sulfur (Fe-S) cluster assembly. May act as a regulator of Fe-S biogenesis. This Escherichia coli O7:K1 (strain IAI39 / ExPEC) protein is Iron-sulfur cluster assembly protein CyaY.